The following is a 308-amino-acid chain: Reticulon-like protein 1 (308 aa).

Composition is skewed to polar residues over residues 1–17 (MSEQHSLNPFESGSVTA) and 41–66 (PSTELPSATSFPSALPNSENPVIQNI). 2 disordered regions span residues 1-22 (MSEQHSLNPFESGSVTASDVAA) and 41-92 (PSTE…CPVS). N65 is a glycosylation site (N-linked (GlcNAc...) asparagine). Low complexity predominate over residues 67–81 (SSSSSEPHHTSQSTP). Residues N113 and N135 are each glycosylated (N-linked (GlcNAc...) asparagine). The 182-residue stretch at 127 to 308 (LWSVLTWKNT…TETINTTVNK (182 aa)) folds into the Reticulon domain. Helical transmembrane passes span 138–158 (CSFSTLMSILALVYVPSWINL), 166–186 (FRYVFLITSIIEFGGLFASNG), 233–253 (PILTFTASVAAFIEFFLSGFL), and 255–275 (YKSLFVWNVLFAFILPRLYVC). An N-linked (GlcNAc...) asparagine glycan is attached at N303.

In terms of assembly, interacts with TTS1 and YOP1.

The protein localises to the endoplasmic reticulum membrane. It localises to the nucleus membrane. Required for the correct positioning of the cellular division plane by delimiting the actomyosin ring assembly at the cell equator. Overexpression causes cell lysis. This chain is Reticulon-like protein 1 (rtn1), found in Schizosaccharomyces pombe (strain 972 / ATCC 24843) (Fission yeast).